A 420-amino-acid polypeptide reads, in one-letter code: Mannose-1-phosphate guanylyltransferase regulatory subunit alpha (420 aa).

The segment at 2-251 (LKAVILIGGP…DGIWSQIKSA (250 aa)) is substrate-binding domain. GDP-alpha-D-mannose is bound by residues Glu85 and Gln247. The segment at 273-420 (LAKHTPGGPR…SRSFTNQIIL (148 aa)) is hexapeptide repeat domain. Positions 356-384 (TPNDPNPNDPRARMDSESLFKDGKLLPAI) are C-loop.

It belongs to the transferase hexapeptide repeat family. In terms of assembly, component of the GMPPA-GMPPB mannose-1-phosphate guanylyltransferase complex composed of 4 GMPPA subunits and 8 GMPPB subunits; the complex is organized into three layers, a central layer made up of 2 GMPPA dimers sandwiched between two layers each made up of 2 GMPPB dimers.

The protein localises to the cytoplasm. Its function is as follows. Regulatory subunit of the GMPPA-GMPPB mannose-1-phosphate guanylyltransferase complex; reduces the catalytic activity of GMPPB when part of the complex. Mediates allosteric feedback inhibition of GMPPB catalytic activity upon binding GDP-alpha-D-mannose. Together with GMPPB regulates GDP-alpha-D-mannose levels. This chain is Mannose-1-phosphate guanylyltransferase regulatory subunit alpha (GMPPA), found in Papio anubis (Olive baboon).